A 435-amino-acid polypeptide reads, in one-letter code: Homoserine dehydrogenase (435 aa).

Residues T13, V14, and K104 each coordinate NADPH. V14 provides a ligand contact to NAD(+). NADP(+) contacts are provided by V14 and K104. 4 residues coordinate Na(+): E128, V131, G133, and I135. Residues G186 and E189 each coordinate NADP(+). Positions 189 and 200 each coordinate L-homoserine. K204 functions as the Proton donor in the catalytic mechanism. Position 301 (G301) interacts with NADPH. G301 is a binding site for NAD(+). G301 contacts NADP(+). The ACT domain occupies 354-429; the sequence is YLRVQAKDEP…CVEKPITMIR (76 aa).

The protein belongs to the homoserine dehydrogenase family. As to quaternary structure, homotetramer. It depends on a metal cation as a cofactor.

The enzyme catalyses L-homoserine + NAD(+) = L-aspartate 4-semialdehyde + NADH + H(+). It participates in amino-acid biosynthesis; L-methionine biosynthesis via de novo pathway; L-homoserine from L-aspartate: step 3/3. The protein operates within amino-acid biosynthesis; L-threonine biosynthesis; L-threonine from L-aspartate: step 3/5. Neither NaCl nor KCl increase the activity. L-threonine and L-serine do not markedly inhibit the oxidation activity. In terms of biological role, catalyzes the conversion of L-aspartate-beta-semialdehyde (L-Asa) to L-homoserine (L-Hse), the third step in the biosynthesis of threonine and methionine from aspartate. Is highly specific for NAD(+), and displays an approximate 479-fold (kcat/Km) preference for NAD(+) over NADP(+). The polypeptide is Homoserine dehydrogenase (Neisseria gonorrhoeae (strain ATCC 700825 / FA 1090)).